The sequence spans 151 residues: 1,4-dihydroxy-2-naphthoyl-CoA hydrolase (151 aa).

Asp-19 is a catalytic residue.

Belongs to the 4-hydroxybenzoyl-CoA thioesterase family. DHNA-CoA hydrolase subfamily.

It carries out the reaction 1,4-dihydroxy-2-naphthoyl-CoA + H2O = 1,4-dihydroxy-2-naphthoate + CoA + H(+). It functions in the pathway cofactor biosynthesis; phylloquinone biosynthesis. It participates in quinol/quinone metabolism; 1,4-dihydroxy-2-naphthoate biosynthesis; 1,4-dihydroxy-2-naphthoate from chorismate: step 7/7. In terms of biological role, catalyzes the hydrolysis of 1,4-dihydroxy-2-naphthoyl-CoA (DHNA-CoA) to 1,4-dihydroxy-2-naphthoate (DHNA), a reaction involved in phylloquinone (vitamin K1) biosynthesis. The protein is 1,4-dihydroxy-2-naphthoyl-CoA hydrolase of Prochlorococcus marinus (strain MIT 9303).